We begin with the raw amino-acid sequence, 3078 residues long: MTENIHNNSTYNNKLIRDRNDYDDVDGSGDVAVIGIGLRFPSGNLKESISKPNQLFNELLNGLDGIVTTSERWSDNYYLNGEIVSKFAGLLPLDEWKQFDPIFFAINPSNDNVSSIDPQQRLLLKCVWEALEDSGIDPISLRGTNTSTFIGSSTIDYNDLQRSPLETQNNIFGSTTHSIANRIGYCFDFRGENLTIDTACSSSSNAINCGYNSIKSNKSNVSIVGGVNFILDPHISKSFTKLDMLSPTGRCHTFSSDADGYVRSEGVGIVVLKKLKDAIKDSNNIYCVIKGSNSNIDGNFDKLNFYSPSKSSQYENIKLAIKSTNGQINESDIDYCETHGTGTPTGDPIELEGISRVFNNKASTTTLINNNKQVLVGSIKSNIGHTEACSGVASLIKCCLMFKNKLFLQNINFKEPNPLINFKEWGLKVVTEPIKFNENKSTVMLLNNFGVTGSNVCLILSEFYGNQFSYNKSNSYHKIKIDNKFNEKKKYLIPLSSNSSTSLNNYKSSIIKHSNSSSTTTSFKEFVHNQIKFKSTSLIQKSVIIASDWNEFQDENNQIKLENSDNLISNITVEKKKSPITVMVLCGQGSQYNKMASSLYDNEPIFRESVNRFDKELFKYYGYSVLDKLRSIDDKDLISIHQPILAQPANVIIQVSLYELYKHWGVSADIIIGHSLGEISSSYCSGIIDFQTLCYLTYHRSVAQNRTIGTGRMLSVNISSDEFINKYQSTTKYESLEIACYNSPTSIVISGNEDLLNEITNEFKSNDIFCTMLGLLSSFHTSSQQMIKDEVCSLNISSKQPSIAVFSTVTTNLFNHQSSPFNADYVFNNIRQPVRFTQTITNLYKHIESNDMGNEITFIEVSPHPTLQYYLNQMKSTQSSYFNNGKNITIYSPLNKKKNDYNEFLKTISLLYVNNNFDINFKSQLINNNNTNQLNNLPLYQWDDKEYFKINSFHEKIKNEGPSIHSLGNNTDSPYPSYQTFIDIKKLPFQWLKGHQVSDKFYYPGMGYVLNLLSIYPNQDITIGSLEFKSPLVLTEGNNQCLQTTIAPLSKNEFNIKSHYKDQKTNQWILSSLGNFSLTKHNIENNEPINIQSLKDKCNFTSISKQDLYETIRIKTNLTYKGLFQGVKQCHIGSNCSLTIVSLNEIYNQKEYNHLLNNSIMDTFFNTAILDTCLHGVLVAVTQPIVLDRIEAFKFYSSNYPSFNNNNNSNNNDTIKELYVYSEIRARTNSQTYSGSIKIILPNGTLLVDIGNVVCTIVGSNPDSTIICKPPSNEIYTPYLQSKDSMINKPEQFKHLYRVDEFSVKEEGNRFISKGLLPSLFYKHINKRCPSINLESLTTLEYDQFKQLYYDNSLANENLFKFIFEVLKKFQNNPNINNNNNNNNNNNNNNNNNSNGYNNYENLYIRATKVMAKQLFPLKDDDSITDTPQSLFESGYLDEFYKNSNVIKPSNNLLSEIIVETLKPILNEPIVFRILEAGGGTGSLSLLILEKICKLLNDNSTTSIINIEFTWSDVSASFFAEIKENFSSFTNHNNLNIIYRVLDLEKPLLDQDLKASYYDFVVMSNVMHVVKKLKPTLNEIHNILTPNGQLLFIEPPYKSFYFDSIFGCFSQWWPSSDSDIELRPDRCCMKQEKWINLLNQCNYRDTIMSGNDNLVFLIQTRKPTINEIISEQSISLDQLNSFNNIILFSSNSNNIRNINSYKNDICSSSIQNLIRLNQELKHKIVNISNYNEFQSWITNYQNKDDCNKTLIIFLKSIESTMNTFNFKEITFEYIQINQLILKLELSNNFKHLLLSLNSTTDNYLSSSIIGAARYFVEFPQLDLLTLNYDNISIENNQQLSLINYLINPNNNIQKEFTINNNKVYYERYCRRSNNIKSIFQSKSFETNKDNLYIQLNSNLEYQLYSKKAKLNSNEVEIEVKATGINYKDYLMYIGMIGSDLDIKYGKEYEIENGIGIDNPNIGNDFSGIITRLGNNVKKFKVGDQVCGIGSKASSSHVIVDFTSIYYKPLNYSHSVSASIPSIYITSLHSIYSIGNLKSNESILIHSAAGGIGISSLDLLKSKQHQGYIFLTVSSKDKEEYLIKKYGSLITAIYSSRNKNYVKDIKNKLMELGEVEQQGVDLILNTLSSEYMDSNFQCLNLSGRIVDLSITHLTPNDYMTNNHFKFNMTYSNVEVVDFTSKLIKSYLKKIIKMINSNKLELSVPIIEYSNNQFKDAIEYINQRKHIGKIIVNHNQDEFNRVYNNYQSNNNHIIMKHLYDISKLNIGKNILLTGQTGIVLEILKYLVKYSNHSIENIIILSKSKLKWELELLINQSKFKKDNNIKFHFNQIDIEDSNKVNQVLNQLELNENITNIDSIIHFAFMNDIGDVQQVDMNRLNNTHGAKTIGAINLHNQSINRSWNIKQFIMASSVVSIFGSDQQCCYVSACSVIDSLSKYRHSIGLPSLAINLGAISSTGFVSRNNAIETMFKSSIFNLFSPQLVISSLDLFIQNQHQYPNYCLSDFNFEVLPSTLTNQYHSKFDFEINIVKKSNQMKSFTGGNGDNNEIIRSTILNKISELLSIDESKINEDLQLTQYGMDSLVIVQLKNFIDNQLGHNIITIQQLQNNKINQSIEIIKSAHNNNNNNNNNNNNNNNNNNNNNNLVKKEQQSLDEFIKNETKLNESIISRPYSIKNILNNNNNSKSIFLTGSTGFLGAYLLTELIKMNNISKIYCLIRNNSKLTNPIDVIINNLKKHQLINMNKGSPNQRLNSNIESGDNSDNNSQISEDQLIKIIPTIGDISKDNFGLTEQDYLKLSNECDIIINSAADLDLKSNYEESKTVNVNNVNQVIKLSVSNNSSQKLIVHFSSLAVFINHPFKDEEDFEETNLVPSYNSTPIGYVQSKVISEKLLTNAAESRGIPSIIIRPPDIFSNPITGIGHSNDFISLLIKSSKEIGYYPNIHKSVFTTPVTTIAKTTIDLIFNENSWNQNKSKPISIYNFNGDSIEMKSFYRVLENSFKCKEIDFYEWIELVSKSNGKSSKRYSTFHIHKNQNLLLTSFKINSLFKMSNSTKELLISIGSYNHQDWEINESMIFNDIINNH.

In terms of domain architecture, Ketosynthase family 3 (KS3) spans 28-462 (SGDVAVIGIG…GSNVCLILSE (435 aa)). Residues Cys200, His339, and His385 each act as for beta-ketoacyl synthase activity in the active site. An acyl/malonyl transferase region spans residues 665 to 698 (GVSADIIIGHSLGEISSSYCSGIIDFQTLCYLTY). Ser675 serves as the catalytic For acyl/malonyl transferase activity. Residues 954–1083 (HEKIKNEGPS…GNFSLTKHNI (130 aa)) are N-terminal hotdog fold. The region spanning 954 to 1264 (HEKIKNEGPS…CTIVGSNPDS (311 aa)) is the PKS/mFAS DH domain. The Proton acceptor; for dehydratase activity role is filled by His995. The tract at residues 1099–1264 (NFTSISKQDL…CTIVGSNPDS (166 aa)) is C-terminal hotdog fold. The active-site Proton donor; for dehydratase activity is the Asp1171. Residues 1375-1396 (NINNNNNNNNNNNNNNNNNSNG) are disordered. The Carrier domain maps to 2541-2618 (DNNEIIRSTI…QSIEIIKSAH (78 aa)). O-(pantetheine 4'-phosphoryl)serine is present on Ser2578. 2 disordered regions span residues 2617–2640 (AHNN…NNNN) and 2739–2761 (NKGS…DNNS). Residues 2619–2640 (NNNNNNNNNNNNNNNNNNNNNN) are compositionally biased toward low complexity. Residues 2621–2652 (NNNNNNNNNNNNNNNNNNNNLVKKEQQSLDEF) adopt a coiled-coil conformation.

Pantetheine 4'-phosphate serves as cofactor.

In terms of biological role, probable polyketide synthase. This is Probable polyketide synthase 34 (pks34) from Dictyostelium discoideum (Social amoeba).